The chain runs to 163 residues: HTH-type transcriptional regulator IscR (163 aa).

The region spanning 2–131 (RLTSKGRYAV…NNITLGELVN (130 aa)) is the HTH rrf2-type domain. Residues 28–51 (LADISERQGISLSYLEQLFSRLRK) constitute a DNA-binding region (H-T-H motif). [2Fe-2S] cluster is bound by residues cysteine 92, cysteine 98, and cysteine 104.

It depends on [2Fe-2S] cluster as a cofactor.

Regulates the transcription of several operons and genes involved in the biogenesis of Fe-S clusters and Fe-S-containing proteins. The sequence is that of HTH-type transcriptional regulator IscR from Enterobacter sp. (strain 638).